A 204-amino-acid polypeptide reads, in one-letter code: 3-dehydroquinate dehydratase (204 aa).

3-dehydroquinate-binding positions include S9, 30–32 (ELR), and R57. The Proton donor/acceptor role is filled by H108. The active-site Schiff-base intermediate with substrate is the K133. Residues R167, T186, and Q190 each contribute to the 3-dehydroquinate site.

The protein belongs to the type-I 3-dehydroquinase family. Homodimer.

The enzyme catalyses 3-dehydroquinate = 3-dehydroshikimate + H2O. It participates in metabolic intermediate biosynthesis; chorismate biosynthesis; chorismate from D-erythrose 4-phosphate and phosphoenolpyruvate: step 3/7. Involved in the third step of the chorismate pathway, which leads to the biosynthesis of aromatic amino acids. Catalyzes the cis-dehydration of 3-dehydroquinate (DHQ) and introduces the first double bond of the aromatic ring to yield 3-dehydroshikimate. The polypeptide is 3-dehydroquinate dehydratase (Metallosphaera sedula (strain ATCC 51363 / DSM 5348 / JCM 9185 / NBRC 15509 / TH2)).